The primary structure comprises 542 residues: Hydroxylamine reductase (542 aa).

Positions 5, 8, 17, and 23 each coordinate [4Fe-4S] cluster. Positions 237, 261, 305, 397, 425, 450, 485, and 487 each coordinate hybrid [4Fe-2O-2S] cluster. Residue C397 is modified to Cysteine persulfide.

It belongs to the HCP family. It depends on [4Fe-4S] cluster as a cofactor. Hybrid [4Fe-2O-2S] cluster serves as cofactor.

The protein resides in the cytoplasm. It carries out the reaction A + NH4(+) + H2O = hydroxylamine + AH2 + H(+). In terms of biological role, catalyzes the reduction of hydroxylamine to form NH(3) and H(2)O. The sequence is that of Hydroxylamine reductase from Acetivibrio thermocellus (strain ATCC 27405 / DSM 1237 / JCM 9322 / NBRC 103400 / NCIMB 10682 / NRRL B-4536 / VPI 7372) (Clostridium thermocellum).